A 332-amino-acid polypeptide reads, in one-letter code: Ferredoxin--NADP reductase (332 aa).

Thr-20, Glu-39, Gln-47, Tyr-52, Val-92, Phe-126, Asp-288, and Thr-329 together coordinate FAD.

This sequence belongs to the ferredoxin--NADP reductase type 2 family. In terms of assembly, homodimer. FAD is required as a cofactor.

The catalysed reaction is 2 reduced [2Fe-2S]-[ferredoxin] + NADP(+) + H(+) = 2 oxidized [2Fe-2S]-[ferredoxin] + NADPH. This is Ferredoxin--NADP reductase from Geobacillus kaustophilus (strain HTA426).